The following is a 364-amino-acid chain: NAD(P)H-quinone oxidoreductase subunit 1, chloroplastic (364 aa).

6 helical membrane passes run 27–47 (IWLL…VLVI), 98–118 (FSVG…VIPF), 127–147 (ISIG…GLLM), 255–275 (GLFY…VTVL), 301–321 (VFGS…FLFV), and 337–357 (LLNL…LLTT).

Belongs to the complex I subunit 1 family. As to quaternary structure, NDH is composed of at least 16 different subunits, 5 of which are encoded in the nucleus.

It is found in the plastid. Its subcellular location is the chloroplast thylakoid membrane. The enzyme catalyses a plastoquinone + NADH + (n+1) H(+)(in) = a plastoquinol + NAD(+) + n H(+)(out). It catalyses the reaction a plastoquinone + NADPH + (n+1) H(+)(in) = a plastoquinol + NADP(+) + n H(+)(out). NDH shuttles electrons from NAD(P)H:plastoquinone, via FMN and iron-sulfur (Fe-S) centers, to quinones in the photosynthetic chain and possibly in a chloroplast respiratory chain. The immediate electron acceptor for the enzyme in this species is believed to be plastoquinone. Couples the redox reaction to proton translocation, and thus conserves the redox energy in a proton gradient. This chain is NAD(P)H-quinone oxidoreductase subunit 1, chloroplastic, found in Illicium oligandrum (Star anise).